A 584-amino-acid polypeptide reads, in one-letter code: MEIVFSSSLSSTLTVTKILRSPRHATTGNMQDYSRFPLFFTIASRSNASQAKHRRSANYHPTIWDPKAIECLRTPYTYDGVHGARLQKLKDEVRSLLTTFTKEPCGQLKLIDSMQRLGVSYHFREEIEEILNLVELDSDSDLYTTALHFRLLRQHGFTISKEVFEKFRNEDGKFKDSLKEDILGLLSLYDASYLGMHGEHILEEAKDFSTEQLKSLLGRSQGDIVTYQVKQALDVPLHWRMQRIENRNYINIYQKEDTNNLALLELAKLDYNLVQSVYQIELKELARWWIALGFREKLHFSRDRLMENYLWSMGMIFEPHFSKCRIYLTKFICILSSIDDMYDIYGSLDELELFTSALKRWDPMALEELPDYMKICYLAILNFASELVYDVLKEEGLYTLPFIRDEWVKLCQAYLVEARWFNSGYTPTFDEYLENAWISVGGHEAIVHACALLGHTSTEDFQNFLKHGFELIYWSSLLVRLNDDLGTSQAEIKRGDVVKSIQCYMIEKGVSEKEAKDHVKGLISHAWKVLNEESVKCSLSRSFVNVCLNMTRTAQCIFQYGDGIGTSIGVTKDRLEFLIVKPIL.

D339, D343, and E491 together coordinate Mg(2+). Residues 339 to 343 (DDMYD) carry the DDXXD motif motif.

It belongs to the terpene synthase family. The cofactor is Mg(2+).

In terms of biological role, probable sesquiterpene synthase. The chain is Probable terpene synthase 9 (TPS9) from Ricinus communis (Castor bean).